Reading from the N-terminus, the 233-residue chain is Purine nucleoside phosphorylase DeoD-type (233 aa).

Residue His4 coordinates a purine D-ribonucleoside. Phosphate-binding positions include Gly20, Arg24, Arg43, and Arg87 to Thr90. Residues Glu179–Glu181 and Ser203–Asp204 each bind a purine D-ribonucleoside. Asp204 acts as the Proton donor in catalysis.

The protein belongs to the PNP/UDP phosphorylase family. In terms of assembly, homohexamer; trimer of homodimers.

The catalysed reaction is a purine D-ribonucleoside + phosphate = a purine nucleobase + alpha-D-ribose 1-phosphate. The enzyme catalyses a purine 2'-deoxy-D-ribonucleoside + phosphate = a purine nucleobase + 2-deoxy-alpha-D-ribose 1-phosphate. In terms of biological role, catalyzes the reversible phosphorolytic breakdown of the N-glycosidic bond in the beta-(deoxy)ribonucleoside molecules, with the formation of the corresponding free purine bases and pentose-1-phosphate. The sequence is that of Purine nucleoside phosphorylase DeoD-type from Clostridium novyi (strain NT).